A 72-amino-acid chain; its full sequence is Translation initiation factor IF-1 (72 aa).

The region spanning 1–72 (MAKDDVIEVE…TRGRIVWRGK (72 aa)) is the S1-like domain.

Belongs to the IF-1 family. As to quaternary structure, component of the 30S ribosomal translation pre-initiation complex which assembles on the 30S ribosome in the order IF-2 and IF-3, IF-1 and N-formylmethionyl-tRNA(fMet); mRNA recruitment can occur at any time during PIC assembly.

The protein localises to the cytoplasm. One of the essential components for the initiation of protein synthesis. Stabilizes the binding of IF-2 and IF-3 on the 30S subunit to which N-formylmethionyl-tRNA(fMet) subsequently binds. Helps modulate mRNA selection, yielding the 30S pre-initiation complex (PIC). Upon addition of the 50S ribosomal subunit IF-1, IF-2 and IF-3 are released leaving the mature 70S translation initiation complex. This chain is Translation initiation factor IF-1, found in Caldanaerobacter subterraneus subsp. tengcongensis (strain DSM 15242 / JCM 11007 / NBRC 100824 / MB4) (Thermoanaerobacter tengcongensis).